The sequence spans 228 residues: Phosphoribosylformylglycinamidine synthase subunit PurQ (228 aa).

The region spanning 2-225 (KAAVISFPGS…INQTEGADVR (224 aa)) is the Glutamine amidotransferase type-1 domain. Cys86 (nucleophile) is an active-site residue. Active-site residues include His194 and Glu196.

As to quaternary structure, part of the FGAM synthase complex composed of 1 PurL, 1 PurQ and 2 PurS subunits.

The protein resides in the cytoplasm. The enzyme catalyses N(2)-formyl-N(1)-(5-phospho-beta-D-ribosyl)glycinamide + L-glutamine + ATP + H2O = 2-formamido-N(1)-(5-O-phospho-beta-D-ribosyl)acetamidine + L-glutamate + ADP + phosphate + H(+). It carries out the reaction L-glutamine + H2O = L-glutamate + NH4(+). It functions in the pathway purine metabolism; IMP biosynthesis via de novo pathway; 5-amino-1-(5-phospho-D-ribosyl)imidazole from N(2)-formyl-N(1)-(5-phospho-D-ribosyl)glycinamide: step 1/2. Its function is as follows. Part of the phosphoribosylformylglycinamidine synthase complex involved in the purines biosynthetic pathway. Catalyzes the ATP-dependent conversion of formylglycinamide ribonucleotide (FGAR) and glutamine to yield formylglycinamidine ribonucleotide (FGAM) and glutamate. The FGAM synthase complex is composed of three subunits. PurQ produces an ammonia molecule by converting glutamine to glutamate. PurL transfers the ammonia molecule to FGAR to form FGAM in an ATP-dependent manner. PurS interacts with PurQ and PurL and is thought to assist in the transfer of the ammonia molecule from PurQ to PurL. The polypeptide is Phosphoribosylformylglycinamidine synthase subunit PurQ (Lacticaseibacillus casei (strain BL23) (Lactobacillus casei)).